The following is a 342-amino-acid chain: Biotin synthase (342 aa).

The 226-residue stretch at 63-288 (PEVEVEGIIS…RTMLRFAGGR (226 aa)) folds into the Radical SAM core domain. [4Fe-4S] cluster contacts are provided by Cys78, Cys82, and Cys85. Positions 121, 154, 213, and 283 each coordinate [2Fe-2S] cluster.

Belongs to the radical SAM superfamily. Biotin synthase family. As to quaternary structure, homodimer. [4Fe-4S] cluster serves as cofactor. The cofactor is [2Fe-2S] cluster.

It carries out the reaction (4R,5S)-dethiobiotin + (sulfur carrier)-SH + 2 reduced [2Fe-2S]-[ferredoxin] + 2 S-adenosyl-L-methionine = (sulfur carrier)-H + biotin + 2 5'-deoxyadenosine + 2 L-methionine + 2 oxidized [2Fe-2S]-[ferredoxin]. It participates in cofactor biosynthesis; biotin biosynthesis; biotin from 7,8-diaminononanoate: step 2/2. Catalyzes the conversion of dethiobiotin (DTB) to biotin by the insertion of a sulfur atom into dethiobiotin via a radical-based mechanism. This is Biotin synthase from Mycobacteroides abscessus (strain ATCC 19977 / DSM 44196 / CCUG 20993 / CIP 104536 / JCM 13569 / NCTC 13031 / TMC 1543 / L948) (Mycobacterium abscessus).